Reading from the N-terminus, the 1293-residue chain is Phosphoribosylformylglycinamidine synthase (1293 aa).

ATP-binding positions include 305 to 316 (GAATGSGGEIRD) and A676. A disordered region spans residues 305-327 (GAATGSGGEIRDEGATGRGSKPK). 4 residues coordinate Mg(2+): D677, E716, N720, and D884. An ATP-binding site is contributed by S886. The Glutamine amidotransferase type-1 domain occupies 1040-1293 (MAILREQGVN…MFRNARVNLG (254 aa)). C1133 functions as the Nucleophile in the catalytic mechanism. Catalysis depends on residues H1258 and E1260.

The protein in the N-terminal section; belongs to the FGAMS family. As to quaternary structure, monomer.

It is found in the cytoplasm. The catalysed reaction is N(2)-formyl-N(1)-(5-phospho-beta-D-ribosyl)glycinamide + L-glutamine + ATP + H2O = 2-formamido-N(1)-(5-O-phospho-beta-D-ribosyl)acetamidine + L-glutamate + ADP + phosphate + H(+). Its pathway is purine metabolism; IMP biosynthesis via de novo pathway; 5-amino-1-(5-phospho-D-ribosyl)imidazole from N(2)-formyl-N(1)-(5-phospho-D-ribosyl)glycinamide: step 1/2. Phosphoribosylformylglycinamidine synthase involved in the purines biosynthetic pathway. Catalyzes the ATP-dependent conversion of formylglycinamide ribonucleotide (FGAR) and glutamine to yield formylglycinamidine ribonucleotide (FGAM) and glutamate. The chain is Phosphoribosylformylglycinamidine synthase from Shewanella sp. (strain MR-4).